The primary structure comprises 188 residues: Large ribosomal subunit protein eL18 (188 aa).

The tract at residues 143-188 (RSAREAEKHFGPAPGVPHSHTKPHVRSKGRKFERARGRRASRAYKN) is disordered. 2 stretches are compositionally biased toward basic residues: residues 161–171 (SHTKPHVRSKG) and 178–188 (RGRRASRAYKN).

Belongs to the eukaryotic ribosomal protein eL18 family.

It is found in the cytoplasm. This chain is Large ribosomal subunit protein eL18 (rpl-18), found in Caenorhabditis briggsae.